The chain runs to 362 residues: tRNA N6-adenosine threonylcarbamoyltransferase (362 aa).

Residues His120 and His124 each contribute to the Fe cation site. Substrate contacts are provided by residues 142–146, Asp175, Gly188, and Asn288; that span reads LASGG. A Fe cation-binding site is contributed by Asp316. The segment covering 342-351 has biased composition (basic and acidic residues); the sequence is RPRWPLDPDA. Residues 342–362 are disordered; it reads RPRWPLDPDAPKAAGAGGVKA.

It belongs to the KAE1 / TsaD family. Fe(2+) serves as cofactor.

It localises to the cytoplasm. It carries out the reaction L-threonylcarbamoyladenylate + adenosine(37) in tRNA = N(6)-L-threonylcarbamoyladenosine(37) in tRNA + AMP + H(+). Its function is as follows. Required for the formation of a threonylcarbamoyl group on adenosine at position 37 (t(6)A37) in tRNAs that read codons beginning with adenine. Is involved in the transfer of the threonylcarbamoyl moiety of threonylcarbamoyl-AMP (TC-AMP) to the N6 group of A37, together with TsaE and TsaB. TsaD likely plays a direct catalytic role in this reaction. This is tRNA N6-adenosine threonylcarbamoyltransferase from Rhodospirillum rubrum (strain ATCC 11170 / ATH 1.1.1 / DSM 467 / LMG 4362 / NCIMB 8255 / S1).